Here is an 804-residue protein sequence, read N- to C-terminus: Phenylalanine--tRNA ligase beta subunit (804 aa).

The tRNA-binding domain maps to 40–155; sequence GEGIKGVVIG…NDAETGSDAL (116 aa). The region spanning 409 to 484 is the B5 domain; that stretch reads IEANNIHVSA…RLYGYDNIPS (76 aa). Mg(2+)-binding residues include D462, D468, E471, and E472. The FDX-ACB domain maps to 710–803; it reads PKYPSVTRDI…LEDTYQAVLR (94 aa).

The protein belongs to the phenylalanyl-tRNA synthetase beta subunit family. Type 1 subfamily. In terms of assembly, tetramer of two alpha and two beta subunits. Requires Mg(2+) as cofactor.

It localises to the cytoplasm. It carries out the reaction tRNA(Phe) + L-phenylalanine + ATP = L-phenylalanyl-tRNA(Phe) + AMP + diphosphate + H(+). The chain is Phenylalanine--tRNA ligase beta subunit (pheT) from Bacillus subtilis (strain 168).